The chain runs to 192 residues: dTTP/UTP pyrophosphatase (192 aa).

The active-site Proton acceptor is D65.

Belongs to the Maf family. YhdE subfamily. A divalent metal cation is required as a cofactor.

Its subcellular location is the cytoplasm. The enzyme catalyses dTTP + H2O = dTMP + diphosphate + H(+). It catalyses the reaction UTP + H2O = UMP + diphosphate + H(+). In terms of biological role, nucleoside triphosphate pyrophosphatase that hydrolyzes dTTP and UTP. May have a dual role in cell division arrest and in preventing the incorporation of modified nucleotides into cellular nucleic acids. The protein is dTTP/UTP pyrophosphatase of Fusobacterium nucleatum subsp. nucleatum (strain ATCC 25586 / DSM 15643 / BCRC 10681 / CIP 101130 / JCM 8532 / KCTC 2640 / LMG 13131 / VPI 4355).